Consider the following 514-residue polypeptide: Peptide chain release factor 3 (514 aa).

The region spanning 8–268 is the tr-type G domain; the sequence is KKRRTFAIIS…TFLKFAPEPH (261 aa). GTP is bound by residues 17–24, 85–89, and 139–142; these read SHPDAGKT, DTPGH, and NKLD.

Belongs to the TRAFAC class translation factor GTPase superfamily. Classic translation factor GTPase family. PrfC subfamily.

The protein localises to the cytoplasm. Its function is as follows. Increases the formation of ribosomal termination complexes and stimulates activities of RF-1 and RF-2. It binds guanine nucleotides and has strong preference for UGA stop codons. It may interact directly with the ribosome. The stimulation of RF-1 and RF-2 is significantly reduced by GTP and GDP, but not by GMP. The chain is Peptide chain release factor 3 from Streptococcus thermophilus (strain ATCC BAA-491 / LMD-9).